The following is a 65-amino-acid chain: Large ribosomal subunit protein uL29 (65 aa).

It belongs to the universal ribosomal protein uL29 family.

The chain is Large ribosomal subunit protein uL29 from Bacteroides thetaiotaomicron (strain ATCC 29148 / DSM 2079 / JCM 5827 / CCUG 10774 / NCTC 10582 / VPI-5482 / E50).